A 77-amino-acid chain; its full sequence is Chaplin-H (77 aa).

The first 25 residues, 1–25 (MLKKVVAAAAATGGLVLAGAGMAVA), serve as a signal peptide directing secretion. Positions 36–76 (SPGVLSGNVVQVPVHVPVNVCGNTISVIGLLNPAFGNVCIN) constitute a Chaplin domain. 2 forms amyloid fibrils in vitro regions span residues 38–54 (GVLSGNVVQVPVHVPVN) and 57–72 (GNTISVIGLLNPAFGN). A disulfide bridge connects residues C56 and C74.

Belongs to the chaplin family. Short chaplin subfamily. Homodimer; disulfide linked. About 10% of ChpH isolated from cell wall forms disulfide-bonded homodimers.

Its subcellular location is the cell surface. The protein localises to the secreted. The protein resides in the cell wall. It localises to the fimbrium. Functionally, one of 8 partially redundant surface-active proteins required for efficient formation of aerial mycelium; the short chaplins assemble into a hydrophobic, amyloidal fibrillar surface layer that envelopes and protects aerial hyphae and spores, presumably anchored to the long chaplins. Chaplins have an overlapping function with the surface-active SapB peptide; chaplins are essential on minimal medium while on rich medium both chaplins and SapB are required for efficient aerial hyphae formation. Chaplins are also involved in cell attachment to a hydrophobic surface. Forms amyloid fibrils in vitro probably composed of stacked beta-sheets. A small chaplin extract (ChpD, ChpE, ChpF, ChpG and ChpH) self-assembles into 2 different amyloids; small fibrils at the air-water interface form an amphipathic membrane that resembles spore-surface structures involved in aerial hyphae formation, and hydrophilic fibrils in solution that resemble the fibers that attach cells to a hydrophobic surface. At the air-water interface the hydrophilic surface is in contact with water (probably equivalent to the peptidoglycan layer), while the hydrophobic face is exposed to the air, making the surface of the aerial hyphae hydrophobic. A minimal chaplin strain capable of forming aerial mycelium/hyphae on minimal medium contains ChpC, ChpE and ChpH. The strain also has restored rodlet formation on the hyphae surface. A small chaplin extract applied to a chaplin-deficient strain restores aerial hyphae formation. The small chaplin extract forms an amyloid-like structure similar to that seen on the surface of cells without rodlets (rdlA-rdlB deletions), and is highly surface active, reducing surface tension from 72 to 26 mJ/m(2), which probably allows escape of hyphae from an aqueous environment into air. This Streptomyces coelicolor (strain ATCC BAA-471 / A3(2) / M145) protein is Chaplin-H.